The primary structure comprises 283 residues: D-alanine aminotransferase (283 aa).

Residue Tyr-32 coordinates substrate. Arg-51 is a pyridoxal 5'-phosphate binding site. 2 residues coordinate substrate: Arg-99 and His-101. Lys-146 (proton acceptor) is an active-site residue. The residue at position 146 (Lys-146) is an N6-(pyridoxal phosphate)lysine. Position 178 (Glu-178) interacts with pyridoxal 5'-phosphate.

The protein belongs to the class-IV pyridoxal-phosphate-dependent aminotransferase family. Homodimer. The cofactor is pyridoxal 5'-phosphate.

The enzyme catalyses D-alanine + 2-oxoglutarate = D-glutamate + pyruvate. In terms of biological role, acts on the D-isomers of alanine, leucine, aspartate, glutamate, aminobutyrate, norvaline and asparagine. The enzyme transfers an amino group from a substrate D-amino acid to the pyridoxal phosphate cofactor to form pyridoxamine and an alpha-keto acid in the first half-reaction. The second half-reaction is the reverse of the first, transferring the amino group from the pyridoxamine to a second alpha-keto acid to form the product D-amino acid via a ping-pong mechanism. This is an important process in the formation of D-alanine and D-glutamate, which are essential bacterial cell wall components. This Lysinibacillus sphaericus (Bacillus sphaericus) protein is D-alanine aminotransferase (dat).